A 372-amino-acid polypeptide reads, in one-letter code: Queuine tRNA-ribosyltransferase (372 aa).

Asp-89 functions as the Proton acceptor in the catalytic mechanism. Substrate is bound by residues 89 to 93 (DSGGF), Asp-143, Gln-185, and Gly-212. The segment at 243–249 (GVGKPED) is RNA binding. Asp-262 serves as the catalytic Nucleophile. The RNA binding; important for wobble base 34 recognition stretch occupies residues 267 to 271 (TRNAR). Zn(2+) contacts are provided by Cys-300, Cys-302, Cys-305, and His-331.

The protein belongs to the queuine tRNA-ribosyltransferase family. In terms of assembly, homodimer. Within each dimer, one monomer is responsible for RNA recognition and catalysis, while the other monomer binds to the replacement base PreQ1. Zn(2+) is required as a cofactor.

The enzyme catalyses 7-aminomethyl-7-carbaguanine + guanosine(34) in tRNA = 7-aminomethyl-7-carbaguanosine(34) in tRNA + guanine. It functions in the pathway tRNA modification; tRNA-queuosine biosynthesis. Functionally, catalyzes the base-exchange of a guanine (G) residue with the queuine precursor 7-aminomethyl-7-deazaguanine (PreQ1) at position 34 (anticodon wobble position) in tRNAs with GU(N) anticodons (tRNA-Asp, -Asn, -His and -Tyr). Catalysis occurs through a double-displacement mechanism. The nucleophile active site attacks the C1' of nucleotide 34 to detach the guanine base from the RNA, forming a covalent enzyme-RNA intermediate. The proton acceptor active site deprotonates the incoming PreQ1, allowing a nucleophilic attack on the C1' of the ribose to form the product. After dissociation, two additional enzymatic reactions on the tRNA convert PreQ1 to queuine (Q), resulting in the hypermodified nucleoside queuosine (7-(((4,5-cis-dihydroxy-2-cyclopenten-1-yl)amino)methyl)-7-deazaguanosine). The protein is Queuine tRNA-ribosyltransferase of Chromohalobacter salexigens (strain ATCC BAA-138 / DSM 3043 / CIP 106854 / NCIMB 13768 / 1H11).